The following is a 236-amino-acid chain: MNETITYDTWNDMLSKQITDQLIDELDVLKWAYRTYGEKIVYACSFGAEGMVLLDLISKINKNAHIIFLDTGLHFQETYELIETVKERYPGFAIQMLEPELSLTEQGTKYGGELWKHNPNLCCQLRKIEPLKKHLSGMTAWISGLRRDQSPTRKHIQYVNLDQKFELIKICPLIHWTWDDVWTYIRLHNLPYNKLHDQHYPSIGCEMCTLPSPDPNDERAGRWAGREKTECGLHQE.

C122, C123, C205, and C208 together coordinate [4Fe-4S] cluster. Residues 216–236 (NDERAGRWAGREKTECGLHQE) are disordered. C231 serves as the catalytic Nucleophile; cysteine thiosulfonate intermediate.

Belongs to the PAPS reductase family. CysH subfamily. The cofactor is [4Fe-4S] cluster.

It is found in the cytoplasm. The catalysed reaction is [thioredoxin]-disulfide + sulfite + AMP + 2 H(+) = adenosine 5'-phosphosulfate + [thioredoxin]-dithiol. It functions in the pathway sulfur metabolism; hydrogen sulfide biosynthesis; sulfite from sulfate. Functionally, catalyzes the formation of sulfite from adenosine 5'-phosphosulfate (APS) using thioredoxin as an electron donor. This Bacillus subtilis (strain 168) protein is Adenosine 5'-phosphosulfate reductase 2.